The following is a 313-amino-acid chain: Antiviral protein I (313 aa).

The signal sequence occupies residues 1-22; it reads MKSMLVVTISIWLILAPTSTWA. 2 disulfides stabilise this stretch: Cys56–Cys281 and Cys107–Cys128. Residue Tyr94 is part of the active site. Substrate is bound at residue Val95. Ser143 contacts substrate. The active site involves Tyr145. Residue Ser197 participates in substrate binding. Residues Glu198 and Arg201 contribute to the active site. Arg201 is a binding site for substrate. The propeptide occupies 286–313; that stretch reads NQNAMFPQLIMSTYYNYMVNLGDLFEGF.

This sequence belongs to the ribosome-inactivating protein family. Type 1 RIP subfamily. In terms of assembly, monomer. As to expression, expressed in spring leaves (at protein level). Expressed in roots (at protein level).

The enzyme catalyses Endohydrolysis of the N-glycosidic bond at one specific adenosine on the 28S rRNA.. Functionally, possesses antiviral potency. Inhibits viral infection of plants (tobacco mosaic virus). Inhibits protein synthesis. Releases both adenine and guanine from Escherichia coli rRNA in vitro. Activity on guanine is 20 times slower than that on adenine. This is Antiviral protein I (PAP1) from Phytolacca americana (American pokeweed).